The chain runs to 199 residues: Thymidylate kinase (199 aa).

Residue 7-14 (GIDGSGKS) coordinates ATP.

Belongs to the thymidylate kinase family.

The catalysed reaction is dTMP + ATP = dTDP + ADP. Functionally, phosphorylation of dTMP to form dTDP in both de novo and salvage pathways of dTTP synthesis. This is Thymidylate kinase from Thermosipho melanesiensis (strain DSM 12029 / CIP 104789 / BI429).